We begin with the raw amino-acid sequence, 550 residues long: Dihydroxy-acid dehydratase (550 aa).

Asp78 provides a ligand contact to Mg(2+). Residue Cys119 participates in [2Fe-2S] cluster binding. The Mg(2+) site is built by Asp120 and Lys121. Position 121 is an N6-carboxylysine (Lys121). Cys191 is a [2Fe-2S] cluster binding site. Glu440 is a binding site for Mg(2+). Residue Ser466 is the Proton acceptor of the active site.

Belongs to the IlvD/Edd family. Homodimer. The cofactor is [2Fe-2S] cluster. It depends on Mg(2+) as a cofactor.

It catalyses the reaction (2R)-2,3-dihydroxy-3-methylbutanoate = 3-methyl-2-oxobutanoate + H2O. It carries out the reaction (2R,3R)-2,3-dihydroxy-3-methylpentanoate = (S)-3-methyl-2-oxopentanoate + H2O. The protein operates within amino-acid biosynthesis; L-isoleucine biosynthesis; L-isoleucine from 2-oxobutanoate: step 3/4. It functions in the pathway amino-acid biosynthesis; L-valine biosynthesis; L-valine from pyruvate: step 3/4. Its function is as follows. Functions in the biosynthesis of branched-chain amino acids. Catalyzes the dehydration of (2R,3R)-2,3-dihydroxy-3-methylpentanoate (2,3-dihydroxy-3-methylvalerate) into 2-oxo-3-methylpentanoate (2-oxo-3-methylvalerate) and of (2R)-2,3-dihydroxy-3-methylbutanoate (2,3-dihydroxyisovalerate) into 2-oxo-3-methylbutanoate (2-oxoisovalerate), the penultimate precursor to L-isoleucine and L-valine, respectively. In Methanococcus maripaludis (strain C6 / ATCC BAA-1332), this protein is Dihydroxy-acid dehydratase.